Consider the following 81-residue polypeptide: ATP synthase subunit c, chloroplastic (81 aa).

2 helical membrane passes run 3-23 and 57-77; these read PIIS…ASIG and LAFM…LLFA.

The protein belongs to the ATPase C chain family. F-type ATPases have 2 components, F(1) - the catalytic core - and F(0) - the membrane proton channel. F(1) has five subunits: alpha(3), beta(3), gamma(1), delta(1), epsilon(1). F(0) has four main subunits: a(1), b(1), b'(1) and c(10-14). The alpha and beta chains form an alternating ring which encloses part of the gamma chain. F(1) is attached to F(0) by a central stalk formed by the gamma and epsilon chains, while a peripheral stalk is formed by the delta, b and b' chains.

It is found in the plastid. The protein resides in the chloroplast thylakoid membrane. In terms of biological role, f(1)F(0) ATP synthase produces ATP from ADP in the presence of a proton or sodium gradient. F-type ATPases consist of two structural domains, F(1) containing the extramembraneous catalytic core and F(0) containing the membrane proton channel, linked together by a central stalk and a peripheral stalk. During catalysis, ATP synthesis in the catalytic domain of F(1) is coupled via a rotary mechanism of the central stalk subunits to proton translocation. Functionally, key component of the F(0) channel; it plays a direct role in translocation across the membrane. A homomeric c-ring of between 10-14 subunits forms the central stalk rotor element with the F(1) delta and epsilon subunits. The protein is ATP synthase subunit c, chloroplastic of Cicer arietinum (Chickpea).